Here is a 249-residue protein sequence, read N- to C-terminus: Selenoprotein BthD (249 aa).

Residues 1–22 (MPPKRNKKAEAPIAERDAGEEL) are disordered. Basic and acidic residues predominate over residues 8–19 (KAEAPIAERDAG). Residues 34–37 (CRSU) constitute a cross-link (cysteinyl-selenocysteine (Cys-Sec); redox-active). A non-standard amino acid (selenocysteine) is located at residue selenocysteine 37. The interval 122–249 (QQESKEQTNT…EATAGAKRRR (128 aa)) is disordered. A Phosphoserine modification is found at serine 147. The span at 175-198 (EQKSEEEPTQVDSKEAKQSKELVK) shows a compositional bias: basic and acidic residues. Residues 199–210 (TKRQPKAQKKQA) show a composition bias toward basic residues.

As to expression, expressed in the developing salivary gland at late stages of embryogenesis. Also expressed in brain, neuroblast and wing disk.

The protein localises to the cytoplasm. It is found in the secreted. In terms of biological role, may be involved in a redox-related process. Required for survival and specifically for salivary gland morphogenesis. The protein is Selenoprotein BthD (BthD) of Drosophila melanogaster (Fruit fly).